A 41-amino-acid chain; its full sequence is Alpha-conotoxin-like Pu1.2 (41 aa).

Positions leucine 1 to arginine 21 are excised as a propeptide. Intrachain disulfides connect cysteine 24–cysteine 30 and cysteine 25–cysteine 37. Cysteine 37 carries the cysteine amide modification. A propeptide spanning residues glycine 38–arginine 41 is cleaved from the precursor.

It belongs to the conotoxin A superfamily. Non-native isomers 'ribbon' (with disulfide connectivity C1-C4, C2-C3) and 'beads' (with disulfide connectivity C1-C2, C3-C4) also inhibit high voltage-activated (HVA) calcium channel currents in rat DRG neurons (25-30% inhibition at 1 uM toxin). In terms of processing, mutants Pu1.2(9-16), [C3S; C9S]Pu1.2 and [C4S]Pu1.2(1-9) are all C-terminally amidated. As to expression, expressed by the venom duct.

It localises to the secreted. Functionally, alpha-conotoxins act on postsynaptic membranes, they bind to the nicotinic acetylcholine receptors (nAChR) and thus inhibit them. This toxin also inhibits high voltage-activated (HVA) calcium channel currents in rat DRG neurons (27% inhibition at 1 uM toxin) probably by activating GABA(B) receptors (GABBR1 and/or GABBR2). The chain is Alpha-conotoxin-like Pu1.2 from Conus pulicarius (Flea-bitten cone).